Consider the following 349-residue polypeptide: Nicotinate-nucleotide--dimethylbenzimidazole phosphoribosyltransferase (349 aa).

The active-site Proton acceptor is the Glu316.

Belongs to the CobT family.

The enzyme catalyses 5,6-dimethylbenzimidazole + nicotinate beta-D-ribonucleotide = alpha-ribazole 5'-phosphate + nicotinate + H(+). It functions in the pathway nucleoside biosynthesis; alpha-ribazole biosynthesis; alpha-ribazole from 5,6-dimethylbenzimidazole: step 1/2. Functionally, catalyzes the synthesis of alpha-ribazole-5'-phosphate from nicotinate mononucleotide (NAMN) and 5,6-dimethylbenzimidazole (DMB). This is Nicotinate-nucleotide--dimethylbenzimidazole phosphoribosyltransferase from Photorhabdus laumondii subsp. laumondii (strain DSM 15139 / CIP 105565 / TT01) (Photorhabdus luminescens subsp. laumondii).